Consider the following 110-residue polypeptide: Large ribosomal subunit protein uL22 (110 aa).

This sequence belongs to the universal ribosomal protein uL22 family. In terms of assembly, part of the 50S ribosomal subunit.

In terms of biological role, this protein binds specifically to 23S rRNA; its binding is stimulated by other ribosomal proteins, e.g. L4, L17, and L20. It is important during the early stages of 50S assembly. It makes multiple contacts with different domains of the 23S rRNA in the assembled 50S subunit and ribosome. The globular domain of the protein is located near the polypeptide exit tunnel on the outside of the subunit, while an extended beta-hairpin is found that lines the wall of the exit tunnel in the center of the 70S ribosome. The chain is Large ribosomal subunit protein uL22 from Buchnera aphidicola subsp. Schizaphis graminum (strain Sg).